A 378-amino-acid chain; its full sequence is uncharacterized protein (378 aa).

The For GATase activity role is filled by C16. One can recognise a Glutamine amidotransferase type-2 domain in the interval 16-378; the sequence is CGLFGVIDRS…ELAKQLSEVE (363 aa).

This is an uncharacterized protein from Archaeoglobus fulgidus (strain ATCC 49558 / DSM 4304 / JCM 9628 / NBRC 100126 / VC-16).